A 244-amino-acid chain; its full sequence is Serine acetyltransferase (244 aa).

Belongs to the transferase hexapeptide repeat family.

It is found in the cytoplasm. It catalyses the reaction L-serine + acetyl-CoA = O-acetyl-L-serine + CoA. The protein operates within amino-acid biosynthesis; L-cysteine biosynthesis; L-cysteine from L-serine: step 1/2. The chain is Serine acetyltransferase (cysE) from Synechococcus elongatus (strain ATCC 33912 / PCC 7942 / FACHB-805) (Anacystis nidulans R2).